The chain runs to 479 residues: Bifunctional protein HldE (479 aa).

A ribokinase region spans residues 1–319 (MTVILPDFLK…NVVQKYEYTK (319 aa)). 195–198 (NMSE) is an ATP binding site. D264 is an active-site residue. The tract at residues 346–479 (MTNGVFDILH…IDTMEINEIN (134 aa)) is cytidylyltransferase.

In the N-terminal section; belongs to the carbohydrate kinase PfkB family. It in the C-terminal section; belongs to the cytidylyltransferase family. As to quaternary structure, homodimer.

The enzyme catalyses D-glycero-beta-D-manno-heptose 7-phosphate + ATP = D-glycero-beta-D-manno-heptose 1,7-bisphosphate + ADP + H(+). The catalysed reaction is D-glycero-beta-D-manno-heptose 1-phosphate + ATP + H(+) = ADP-D-glycero-beta-D-manno-heptose + diphosphate. Its pathway is nucleotide-sugar biosynthesis; ADP-L-glycero-beta-D-manno-heptose biosynthesis; ADP-L-glycero-beta-D-manno-heptose from D-glycero-beta-D-manno-heptose 7-phosphate: step 1/4. It participates in nucleotide-sugar biosynthesis; ADP-L-glycero-beta-D-manno-heptose biosynthesis; ADP-L-glycero-beta-D-manno-heptose from D-glycero-beta-D-manno-heptose 7-phosphate: step 3/4. Catalyzes the phosphorylation of D-glycero-D-manno-heptose 7-phosphate at the C-1 position to selectively form D-glycero-beta-D-manno-heptose-1,7-bisphosphate. Functionally, catalyzes the ADP transfer from ATP to D-glycero-beta-D-manno-heptose 1-phosphate, yielding ADP-D-glycero-beta-D-manno-heptose. This chain is Bifunctional protein HldE, found in Blochmanniella floridana.